The sequence spans 322 residues: tRNA-modifying protein YgfZ (322 aa).

W182 lines the folate pocket.

The protein belongs to the tRNA-modifying YgfZ family.

The protein localises to the cytoplasm. Functionally, folate-binding protein involved in regulating the level of ATP-DnaA and in the modification of some tRNAs. It is probably a key factor in regulatory networks that act via tRNA modification, such as initiation of chromosomal replication. The chain is tRNA-modifying protein YgfZ from Vibrio parahaemolyticus serotype O3:K6 (strain RIMD 2210633).